The chain runs to 401 residues: Phosphoglycerate kinase (401 aa).

Residues 21 to 23 (DLN), Arg-36, 59 to 62 (HQGR), Arg-116, and Arg-156 contribute to the substrate site. Residues Glu-331 and 357–360 (GGDT) contribute to the ATP site.

The protein belongs to the phosphoglycerate kinase family.

The protein localises to the cytoplasm. The catalysed reaction is (2R)-3-phosphoglycerate + ATP = (2R)-3-phospho-glyceroyl phosphate + ADP. Its pathway is carbohydrate degradation; glycolysis; pyruvate from D-glyceraldehyde 3-phosphate: step 2/5. In Haloarcula vallismortis (Halobacterium vallismortis), this protein is Phosphoglycerate kinase (pgk).